A 132-amino-acid chain; its full sequence is ATP synthase epsilon chain (132 aa).

The protein belongs to the ATPase epsilon chain family. In terms of assembly, F-type ATPases have 2 components, CF(1) - the catalytic core - and CF(0) - the membrane proton channel. CF(1) has five subunits: alpha(3), beta(3), gamma(1), delta(1), epsilon(1). CF(0) has three main subunits: a, b and c.

Its subcellular location is the cell inner membrane. Functionally, produces ATP from ADP in the presence of a proton gradient across the membrane. This Anaeromyxobacter dehalogenans (strain 2CP-1 / ATCC BAA-258) protein is ATP synthase epsilon chain.